The primary structure comprises 910 residues: Lysine-specific demethylase 7 homolog (910 aa).

Positions 1 to 11 (MDGNDINIQKN) are enriched in polar residues. Disordered stretches follow at residues 1-58 (MDGN…HQTP), 103-162 (NKMG…GSEP), and 183-212 (QEEL…DRCG). A compositionally biased stretch (basic and acidic residues) spans 25–35 (QHSDHKNHESA). The segment covering 43–58 (YTASQPALSSTEHQTP) has biased composition (polar residues). The span at 118–130 (PKSEPKIEPHVTD) shows a compositional bias: basic and acidic residues. Polar residues predominate over residues 150–160 (ESNQNYVSNGS). Residues 200-210 (PEQKTPKESDR) show a composition bias toward basic and acidic residues. The PHD-type zinc-finger motif lies at 208-290 (SDRCGGCGKF…KFFCPKCVPH (83 aa)). The JmjC domain maps to 441–612 (SDNNEMKEIA…MQMRVYHLEN (172 aa)). Substrate contacts are provided by residues 505–510 (TDFHVD), tyrosine 518, lysine 525, and histidine 580. Residues histidine 508 and aspartate 510 each contribute to the Fe cation site. Histidine 580 serves as a coordination point for Fe cation. Disordered stretches follow at residues 712-790 (KIQN…PSEV) and 864-910 (EAVH…KLKM). Over residues 748-757 (YKKKYTKKAK) the composition is skewed to basic residues. The span at 758-780 (KDNDDAPKVKKAKKEEVPEEKVP) shows a compositional bias: basic and acidic residues.

The protein belongs to the JHDM1 histone demethylase family. JHDM1D subfamily. The cofactor is Fe(2+). As to expression, mainly expressed in neurons. Also weakly expressed in some muscle, intestinal and hypodermal cells.

The protein localises to the nucleus. Its activity is regulated as follows. Competitively inhibited by 2-hydroxyglutarate. Histone demethylase required for nervous system development. Specifically demethylates dimethylated 'Lys-9', 'Lys-23' and 'Lys-27' (H3K9me2, H3K23me2 and H3K27me2, respectively) of histone H3, thereby playing a central role in histone code. Promotes mitochondrial stress-induced longevity. This Caenorhabditis elegans protein is Lysine-specific demethylase 7 homolog (jmjd-1.2).